A 211-amino-acid polypeptide reads, in one-letter code: WAP four-disulfide core domain protein 1 (211 aa).

A signal peptide spans 1-23 (MGNCGRKVLRALSFLLLLGSSSA). A WAP domain is found at 50–99 (RQPHADRCPPPPRTLPPGACQATRCQADSECPRHRRCCYNGCAYACLEAV). Intrachain disulfides connect Cys-57–Cys-87, Cys-69–Cys-91, Cys-74–Cys-86, and Cys-80–Cys-95. A compositionally biased stretch (basic and acidic residues) spans 182-198 (VLRQRLHKEYPEGDSKN). The interval 182-211 (VLRQRLHKEYPEGDSKNVAEPGKGQQRHFP) is disordered.

The protein localises to the secreted. Has growth inhibitory activity. The polypeptide is WAP four-disulfide core domain protein 1 (Wfdc1) (Mus musculus (Mouse)).